Here is a 524-residue protein sequence, read N- to C-terminus: Cytochrome c nitrite reductase subunit NrfA (524 aa).

Residues 1-24 form the signal peptide; it reads MNNQKTFKGLRLAALGLVAVAAFT. The interval 29 to 39 is interaction with NrfH; the sequence is DVSTELKTPVY. The Ca(2+) site is built by glycine 78, glutamate 117, and alanine 118. Positions 121, 147, 150, 151, 187, 190, and 191 each coordinate heme. Positions 221-222 are interaction with NrfH; the sequence is RN. Heme is bound by residues cysteine 229, cysteine 232, and histidine 233. Positions 235, 236, 295, and 297 each coordinate Ca(2+). Heme-binding residues include histidine 309, cysteine 316, cysteine 319, histidine 320, histidine 335, cysteine 349, cysteine 352, histidine 353, and histidine 434. The tract at residues 318-331 is interaction with NrfH; the sequence is DCHMSYTRSDDKKK. The segment at 351-355 is interaction with NrfH; sequence QCHSD.

This sequence belongs to the cytochrome c-552 family. As to quaternary structure, component of the NrfHA cytochrome c nitrite reductase complex composed of 4 NrfA catalytic subunits and 2 NrfH quinone-binding subunits. NrfA homodimer interacts with NrfH. Ca(2+) is required as a cofactor. The cofactor is heme.

The protein localises to the cell inner membrane. The enzyme catalyses 6 Fe(III)-[cytochrome c] + NH4(+) + 2 H2O = 6 Fe(II)-[cytochrome c] + nitrite + 8 H(+). In terms of biological role, catalytic subunit of the cytochrome c nitrite reductase holocomplex NrfHA. Has both nitrite and sulfite reductase activities. Catalyzes the reduction of nitrite to ammonia, consuming six electrons acquired by the electron donor subunit NrfH from the menaquinone pool, in an anaerobic respiratory process of nitrite. The other biological function of the NrfHA holocomplex is to detoxify nitrite. This function is essential for the survival of this organism as it enables it to overcome inhibition by nitrite, which is produced by other organisms living in the same environment. In Nitratidesulfovibrio vulgaris (strain ATCC 29579 / DSM 644 / CCUG 34227 / NCIMB 8303 / VKM B-1760 / Hildenborough) (Desulfovibrio vulgaris), this protein is Cytochrome c nitrite reductase subunit NrfA.